The following is a 310-amino-acid chain: Ribosomal protein L11 methyltransferase (310 aa).

4 residues coordinate S-adenosyl-L-methionine: Thr-156, Gly-179, Asp-201, and Asn-246.

It belongs to the methyltransferase superfamily. PrmA family.

It is found in the cytoplasm. It catalyses the reaction L-lysyl-[protein] + 3 S-adenosyl-L-methionine = N(6),N(6),N(6)-trimethyl-L-lysyl-[protein] + 3 S-adenosyl-L-homocysteine + 3 H(+). Methylates ribosomal protein L11. The protein is Ribosomal protein L11 methyltransferase of Desulfatibacillum aliphaticivorans.